The following is a 179-amino-acid chain: Adenylyl-sulfate kinase (179 aa).

13 to 20 (GLSGAGKS) contributes to the ATP binding site. Residue serine 87 is the Phosphoserine intermediate of the active site.

It belongs to the APS kinase family.

It catalyses the reaction adenosine 5'-phosphosulfate + ATP = 3'-phosphoadenylyl sulfate + ADP + H(+). It functions in the pathway sulfur metabolism; hydrogen sulfide biosynthesis; sulfite from sulfate: step 2/3. Catalyzes the synthesis of activated sulfate. This Paraburkholderia xenovorans (strain LB400) protein is Adenylyl-sulfate kinase.